The following is a 157-amino-acid chain: Mitochondrial inner membrane protease subunit 1 (157 aa).

Residues Ser35 and Lys80 contribute to the active site.

The protein belongs to the peptidase S26 family. IMP1 subfamily. As to quaternary structure, heterodimer of 2 subunits, imp1 and imp2.

The protein localises to the mitochondrion inner membrane. Catalyzes the removal of transit peptides required for the targeting of proteins from the mitochondrial matrix, across the inner membrane, into the inter-membrane space. The chain is Mitochondrial inner membrane protease subunit 1 (imp1) from Schizosaccharomyces pombe (strain 972 / ATCC 24843) (Fission yeast).